The primary structure comprises 209 residues: Transmembrane domain-containing protein TMIGD3 (209 aa).

The signal sequence occupies residues 1 to 15 (MEFLLLLSLALFSDA). The chain crosses the membrane as a helical span at residues 152–172 (SILIICILITSLGIIFIISHL). The segment at 179 to 201 (QRNREVTGKSISRNPQASQGPSM) is disordered. The span at 187 to 201 (KSISRNPQASQGPSM) shows a compositional bias: polar residues.

The protein resides in the membrane. The chain is Transmembrane domain-containing protein TMIGD3 (Tmigd3) from Mus musculus (Mouse).